The primary structure comprises 175 residues: MPTPADDLVVIGKIVSVYGIRGEVKVYSFTDPLDNLLDYRRWTLRRDGEIRQAELVRGRLHGKVLAAKLKGLDDREEARTFTGYEICIPRSELPSLEEGEYYWHQLEGLKVIDQGRQLLGVIDHLLETGANDVMVVKPCAGSLDDRERLLPYTGQCVLSIDLAAGEMRVDWDADF.

In terms of domain architecture, PRC barrel spans 98–175; the sequence is EGEYYWHQLE…EMRVDWDADF (78 aa).

The protein belongs to the RimM family. Binds ribosomal protein uS19.

It is found in the cytoplasm. In terms of biological role, an accessory protein needed during the final step in the assembly of 30S ribosomal subunit, possibly for assembly of the head region. Essential for efficient processing of 16S rRNA. May be needed both before and after RbfA during the maturation of 16S rRNA. It has affinity for free ribosomal 30S subunits but not for 70S ribosomes. The chain is Ribosome maturation factor RimM from Pseudomonas aeruginosa (strain ATCC 15692 / DSM 22644 / CIP 104116 / JCM 14847 / LMG 12228 / 1C / PRS 101 / PAO1).